The sequence spans 1113 residues: Protein translocase subunit SecA (1113 aa).

ATP is bound by residues Gln175, 193–197 (GEGKT), and Asp694. Over residues 1042-1072 (RHAAEQRTDMSKYRTQKDDIEAQQKAQRDAA) the composition is skewed to basic and acidic residues. A disordered region spans residues 1042 to 1113 (RHAAEQRTDM…KFKQCHGRNL (72 aa)). Zn(2+) is bound by residues Cys1097, Cys1099, Cys1108, and His1109. The span at 1103–1113 (KKFKQCHGRNL) shows a compositional bias: basic residues.

This sequence belongs to the SecA family. As to quaternary structure, monomer and homodimer. Part of the essential Sec protein translocation apparatus which comprises SecA, SecYEG and auxiliary proteins SecDF. Other proteins may also be involved. Requires Zn(2+) as cofactor.

It localises to the cell inner membrane. The protein resides in the cytoplasm. The catalysed reaction is ATP + H2O + cellular proteinSide 1 = ADP + phosphate + cellular proteinSide 2.. In terms of biological role, part of the Sec protein translocase complex. Interacts with the SecYEG preprotein conducting channel. Has a central role in coupling the hydrolysis of ATP to the transfer of proteins into and across the cell membrane, serving as an ATP-driven molecular motor driving the stepwise translocation of polypeptide chains across the membrane. This Porphyromonas gingivalis (strain ATCC 33277 / DSM 20709 / CIP 103683 / JCM 12257 / NCTC 11834 / 2561) protein is Protein translocase subunit SecA.